We begin with the raw amino-acid sequence, 1311 residues long: Stress response protein NST1 (1311 aa).

Disordered stretches follow at residues 1-226 (MKGN…QEER), 308-379 (LGPT…RQRP), 478-521 (NGNN…VQTN), 542-576 (SASA…QRME), and 613-1083 (ELAQ…NLEE). The segment covering 8–27 (PAVASQPTSPASPTPSKGTS) has biased composition (low complexity). Over residues 46-58 (SVETPQPSPTVSA) the composition is skewed to polar residues. The span at 68–86 (GQPPSTAPTAPSGSNASGG) shows a compositional bias: low complexity. Over residues 93 to 103 (NRKKAKRRAKL) the composition is skewed to basic residues. Polar residues predominate over residues 116 to 133 (DNLSNGVAAHSASSSLPK). The segment covering 213–226 (SKEKIWNTSSQEER) has biased composition (basic and acidic residues). Composition is skewed to acidic residues over residues 343–372 (GDDE…EEPE) and 491–518 (PEDD…EEEV). Residues 450-521 (IEMMEQLAER…EYDEEEVQTN (72 aa)) are a coiled coil. The stretch at 599 to 795 (REKVAKERQE…SQKATTLANV (197 aa)) forms a coiled coil. Basic and acidic residues-rich tracts occupy residues 613–682 (ELAQ…NEER) and 689–786 (QRKA…ERAS). 2 stretches are compositionally biased toward low complexity: residues 805–829 (QSQA…PQLP) and 891–922 (SKGS…LPTP). Residues 923-933 (FGMPHPPPNQH) show a composition bias toward pro residues. Low complexity predominate over residues 934–945 (YPPGIGPLNAPP). Residues 960 to 975 (MYQQSPFGFRQATQQH) show a composition bias toward polar residues. A compositionally biased stretch (gly residues) spans 984 to 994 (IPMGPGRGLGH). A compositionally biased stretch (polar residues) spans 1026–1038 (PLSSHSRQASANF). A compositionally biased stretch (low complexity) spans 1041 to 1052 (PIAATPIARPTP).

This sequence belongs to the NST1 family.

Its subcellular location is the cytoplasm. Its function is as follows. May act as a negative regulator of salt tolerance. In Pyricularia oryzae (strain 70-15 / ATCC MYA-4617 / FGSC 8958) (Rice blast fungus), this protein is Stress response protein NST1 (NST1).